Consider the following 318-residue polypeptide: tRNA dimethylallyltransferase (318 aa).

28 to 35 is a binding site for ATP; it reads GPTGAGKS. Residue 30 to 35 coordinates substrate; the sequence is TGAGKS. The interaction with substrate tRNA stretch occupies residues 53–56; sequence DSMQ.

This sequence belongs to the IPP transferase family. Monomer. Requires Mg(2+) as cofactor.

It catalyses the reaction adenosine(37) in tRNA + dimethylallyl diphosphate = N(6)-dimethylallyladenosine(37) in tRNA + diphosphate. Its function is as follows. Catalyzes the transfer of a dimethylallyl group onto the adenine at position 37 in tRNAs that read codons beginning with uridine, leading to the formation of N6-(dimethylallyl)adenosine (i(6)A). This chain is tRNA dimethylallyltransferase, found in Parafrankia sp. (strain EAN1pec).